Reading from the N-terminus, the 194-residue chain is Fe/S biogenesis protein NfuA (194 aa).

Positions 152 and 155 each coordinate [4Fe-4S] cluster.

This sequence belongs to the NfuA family. As to quaternary structure, homodimer. It depends on [4Fe-4S] cluster as a cofactor.

In terms of biological role, involved in iron-sulfur cluster biogenesis. Binds a 4Fe-4S cluster, can transfer this cluster to apoproteins, and thereby intervenes in the maturation of Fe/S proteins. Could also act as a scaffold/chaperone for damaged Fe/S proteins. The chain is Fe/S biogenesis protein NfuA from Teredinibacter turnerae (strain ATCC 39867 / T7901).